Reading from the N-terminus, the 594-residue chain is Adenine deaminase 1 (594 aa).

The protein belongs to the metallo-dependent hydrolases superfamily. Adenine deaminase family. Mn(2+) serves as cofactor.

The enzyme catalyses adenine + H2O + H(+) = hypoxanthine + NH4(+). In Jannaschia sp. (strain CCS1), this protein is Adenine deaminase 1.